A 558-amino-acid chain; its full sequence is T-complex protein 1 subunit gamma (558 aa).

A disulfide bridge links Cys-381 with Cys-387.

It belongs to the TCP-1 chaperonin family. In terms of assembly, heterooligomeric complex of about 850 to 900 kDa that forms two stacked rings, 12 to 16 nm in diameter.

The protein resides in the cytoplasm. Functionally, molecular chaperone; assists the folding of proteins upon ATP hydrolysis. Known to play a role, in vitro, in the folding of actin and tubulin. This chain is T-complex protein 1 subunit gamma, found in Thalassiosira weissflogii (Marine diatom).